The chain runs to 492 residues: N-succinylglutamate 5-semialdehyde dehydrogenase (492 aa).

An NAD(+)-binding site is contributed by 220 to 225 (GSANTG). Residues E243 and C277 contribute to the active site.

It belongs to the aldehyde dehydrogenase family. AstD subfamily.

It catalyses the reaction N-succinyl-L-glutamate 5-semialdehyde + NAD(+) + H2O = N-succinyl-L-glutamate + NADH + 2 H(+). It participates in amino-acid degradation; L-arginine degradation via AST pathway; L-glutamate and succinate from L-arginine: step 4/5. Catalyzes the NAD-dependent reduction of succinylglutamate semialdehyde into succinylglutamate. The chain is N-succinylglutamate 5-semialdehyde dehydrogenase from Shigella flexneri serotype 5b (strain 8401).